A 231-amino-acid chain; its full sequence is Response regulator Rre1 (231 aa).

Residues 6-123 (SLLLVDDEPG…ELEAIVRNLL (118 aa)) form the Response regulatory domain. At Asp-56 the chain carries 4-aspartylphosphate. The region spanning 163–228 (PSPIKLDFTP…ELVRFALQHG (66 aa)) is the HTH luxR-type domain. The segment at residues 187–206 (NKEIAAQLKTSVRNVEKYVS) is a DNA-binding region (H-T-H motif).

Interacts with histidine kinase Hik2; may accept phosphate from Hik2.

In terms of biological role, member of at least 2 two-component regulatory systems Hik2/Rre1 and Hik34/Rre1. Responds to hyperosmotic stress, regulates expression of at least 24 genes including dnaK2 and hspA with Hik34 and sigB (sll0306), sll0528, slr1119, slr0852 and ssr3188 with Hik2. Responds to salt stress, regulates expression of at least 24 genes including adhA, dnaK2 and hspA with Hik34. Binds the adhA promoter. Phosphorylated by Hik2 in vitro. Phosphorylated protein has 10-fold higher affinity for DNA than unphosphorylated protein. The chain is Response regulator Rre1 from Synechocystis sp. (strain ATCC 27184 / PCC 6803 / Kazusa).